Reading from the N-terminus, the 526-residue chain is AAA ATPase forming ring-shaped complexes (526 aa).

Over residues 1–18 (MGDMASSTDPAAHNSFSD) the composition is skewed to polar residues. The tract at residues 1–20 (MGDMASSTDPAAHNSFSDFN) is disordered. Positions 20–59 (NREEMTRLADNVRSLQRTNQDLSARNTKLAEMLKSSRDKL) form a coiled coil. 257–262 (GCGKTL) contributes to the ATP binding site.

Belongs to the AAA ATPase family. In terms of assembly, homohexamer. Assembles into a hexameric ring structure.

The sequence is that of AAA ATPase forming ring-shaped complexes from Corynebacterium efficiens (strain DSM 44549 / YS-314 / AJ 12310 / JCM 11189 / NBRC 100395).